A 404-amino-acid polypeptide reads, in one-letter code: MRELPHVLGIVLAGGEGKRLYPLTADRAKPAVPFGGAYRLIDFVLSNLVNARYLRICVLTQYKSHSLDRHISQNWRLSGLAGEYITPVPAQQRLGPRWYTGSADAIYQSLNLIYDEDPDYIIIFGADHVYRMDPEQMMQFHIESGAGATVAGIRVPRSEASAFGCIDADESGRIREFIEKPADPPGTPDDPEQTFVSMGNYIFTTKVLIDAIRADADDDHSDHDMGGDIIPRLVADGMAAVYDFKNNEVPGATERDHGYWRDVGTLDAFYDAHMDLVSVHPVFNLYNKRWPIRGESENLAPAKFVNGGSAQESVVGAGSIISAASVRNSVLSSNVVVDDGAIVEGSVLMPGVRIGRGAVVRHAILDKNVVVGPGEMVGVDLDKDRERFAISAGGVVAVGKGVWI.

Residues tyrosine 99, glycine 164, 179–180 (EK), and serine 197 each bind alpha-D-glucose 1-phosphate.

The protein belongs to the bacterial/plant glucose-1-phosphate adenylyltransferase family.

It catalyses the reaction alpha-D-glucose 1-phosphate + ATP + H(+) = ADP-alpha-D-glucose + diphosphate. It participates in glycan biosynthesis; glycogen biosynthesis. Involved in the biosynthesis of ADP-glucose building block, required in the biosynthesis of maltose-1-phosphate (M1P) and in the elongation reactions to produce linear alpha-1,4-glucans. Catalyzes the reaction between ATP and alpha-D-glucose 1-phosphate (G1P) to produce pyrophosphate and ADP-Glc. The polypeptide is Glucose-1-phosphate adenylyltransferase (Mycolicibacterium smegmatis (strain ATCC 700084 / mc(2)155) (Mycobacterium smegmatis)).